The primary structure comprises 142 residues: Protein OrfX1 (142 aa).

Belongs to the TULIP P47 family. OrfX1 was not detected as part of a crude toxin extract that includes BoNTA2/NTNH, P47, OrfX2 and OrfX3.

In terms of biological role, part of a botulinum neurotoxin type A2 (BoNT) locus; may be part of a progenitor toxin complex required to protect BoNT during its passage through the host gastrointestinal tract. Binds phosphatidylinositol (3,4) bisphosphate, phosphatidylethanolamine and phosphatidylserine. The sequence is that of Protein OrfX1 (orfX1) from Clostridium botulinum (strain Kyoto / Type A2).